The primary structure comprises 784 residues: MADWDEIKRLAADFQKAQLSTGLQRLSERNCIEIVRLLIEKGLIDVIYTNDGKEYLTQDHLKQEVKDELYVRGGRVNLIELARVLNVDFGKIEYTAKRLVEKDPNLHLLLGQLIETSYLQRLASEINQKLVQYGEIHIGQLTTTYDLPTDFILNKIVLANLHKVIFAKQDPTNAHIFFTQSYIARNKAKIRGALAAITKPTPISVILNLTDVPARILYMSLNEMSSLGSVTVQSPAGQYIPHVYQRMQAQWVKDYFKQNGHIMYETVTKLGVSDVRSFVQAQLPDEKLVQLKNCIIGNRLIDQVKDSMDMCVTSNSYLDISTILPSSLSDDNIEEILTHILTPTIRKQTYVFGMVVLTVNFMDECVKGCLELVNEHAKRAVESGSYQKYIAEKSIKHQEVDHGVMEEEKADKREERRKKASTGKGGGGAQGRETKTKSTKKHARGTRGNVSDSDDGGEIQTNASNKKGGKDPHIELITAKEIAKVVEKTLEPEGLEMLAKDVANHYFPILSKQALVKAHELYEQSLQKNNQNRRQTHASIQEKLNTLYNDIRLYEKGLKLFPADVQGQLLKYLLKTFGTDACNELCLYVASECNLNTNFNAPLTTEQRTKIANDSGPEYRPHLQTLCKALSASETVEDFLDKTEKTMQACSMMLKKIDKKKDRNLILCHKHGLLEQLTNCTDPALVLHLAVLIIFTISTQTMLHASGRHVSAILTFLQTVLSTDDSKVFNNYHDLVLKLLSTESSTTEEAKANAEDITKQLGELTPVVKNIAGNFKKAGVTPVE.

Residues 398 to 414 (QEVDHGVMEEEKADKRE) are compositionally biased toward basic and acidic residues. Residues 398–472 (QEVDHGVMEE…ASNKKGGKDP (75 aa)) are disordered.

It belongs to the UFL1 family.

Functionally, E3 UFM1-protein ligase that mediates ufmylation of target proteins. The protein is E3 UFM1-protein ligase 1 homolog of Anopheles gambiae (African malaria mosquito).